The following is a 308-amino-acid chain: Methionyl-tRNA formyltransferase (308 aa).

109-112 (SLLP) provides a ligand contact to (6S)-5,6,7,8-tetrahydrofolate.

Belongs to the Fmt family.

The enzyme catalyses L-methionyl-tRNA(fMet) + (6R)-10-formyltetrahydrofolate = N-formyl-L-methionyl-tRNA(fMet) + (6S)-5,6,7,8-tetrahydrofolate + H(+). Its function is as follows. Attaches a formyl group to the free amino group of methionyl-tRNA(fMet). The formyl group appears to play a dual role in the initiator identity of N-formylmethionyl-tRNA by promoting its recognition by IF2 and preventing the misappropriation of this tRNA by the elongation apparatus. This is Methionyl-tRNA formyltransferase from Methylobacillus flagellatus (strain ATCC 51484 / DSM 6875 / VKM B-1610 / KT).